Reading from the N-terminus, the 352-residue chain is Elongation factor Ts (352 aa).

The involved in Mg(2+) ion dislocation from EF-Tu stretch occupies residues 81–84 (TDFV).

Belongs to the EF-Ts family.

The protein resides in the cytoplasm. In terms of biological role, associates with the EF-Tu.GDP complex and induces the exchange of GDP to GTP. It remains bound to the aminoacyl-tRNA.EF-Tu.GTP complex up to the GTP hydrolysis stage on the ribosome. The chain is Elongation factor Ts from Campylobacter hominis (strain ATCC BAA-381 / DSM 21671 / CCUG 45161 / LMG 19568 / NCTC 13146 / CH001A).